A 71-amino-acid polypeptide reads, in one-letter code: Delta-actitoxin-Avd2b 4 (71 aa).

Residues 1–20 (MMNRLLVFLMLGAFMLVVSA) form the signal peptide. The propeptide occupies 21 to 41 (NDAYGDEPAFKDLNQGDESLG). 3 disulfide bridges follow: C46–C61, C47–C55, and C49–C66.

The protein belongs to the sea anemone short toxin (type III) family.

Its subcellular location is the secreted. The protein localises to the nematocyst. Its function is as follows. Voltage-gated sodium channel (Nav) inhibitor. 1 uM completely inhibits insect voltage-gated sodium channel inactivation (DmNav1 from D.melanogaster). The protein is Delta-actitoxin-Avd2b 4 of Anemonia viridis (Snakelocks anemone).